A 202-amino-acid chain; its full sequence is Na(+)-translocating NADH-quinone reductase subunit E (202 aa).

6 helical membrane-spanning segments follow: residues 11-31 (SVFIENMALSFFLGMCTFLAV), 35-55 (VTTAMGLGVAVIVVLAISVPA), 79-99 (LSFLKFITFIGVIAALVQILE), 114-134 (GIFLPLITVNCAIFGAVAFMV), 144-164 (LVFGVGSGIGWALAIVLLAAV), and 180-200 (LGITFISAGLMALGFMSFSGV).

The protein belongs to the NqrDE/RnfAE family. Composed of six subunits; NqrA, NqrB, NqrC, NqrD, NqrE and NqrF.

It is found in the cell inner membrane. It carries out the reaction a ubiquinone + n Na(+)(in) + NADH + H(+) = a ubiquinol + n Na(+)(out) + NAD(+). In terms of biological role, NQR complex catalyzes the reduction of ubiquinone-1 to ubiquinol by two successive reactions, coupled with the transport of Na(+) ions from the cytoplasm to the periplasm. NqrA to NqrE are probably involved in the second step, the conversion of ubisemiquinone to ubiquinol. The protein is Na(+)-translocating NADH-quinone reductase subunit E of Shewanella denitrificans (strain OS217 / ATCC BAA-1090 / DSM 15013).